The primary structure comprises 662 residues: Aprataxin-like protein (662 aa).

The 105-residue stretch at 4 to 108 folds into the HIT domain; it reads SSALIKDISK…ISKDFVSTSL (105 aa). The C2H2-type zinc finger occupies 381 to 403; it reads LRCNQCEFVTNMLLDLKAHLYQH. The segment at 482-662 is disordered; sequence KNINGPSVNM…PAPPSNSKPS (181 aa). Positions 490–500 are enriched in low complexity; the sequence is NMMNQNNPNNP. Composition is skewed to polar residues over residues 501–513 and 560–569; these read FRNTPHLNRQSQK and GHQQFPNASS. Residues 570 to 582 are compositionally biased toward gly residues; the sequence is VGGGQTGLPGQGQ. A compositionally biased stretch (polar residues) spans 588 to 599; sequence WNSNKIFNQQNR. The segment covering 600-626 has biased composition (low complexity); it reads QNTVQAQPQAQNQQTNQQQIQNSNKNQ. Residues 653 to 662 show a composition bias toward pro residues; that stretch reads PAPPSNSKPS.

The protein resides in the nucleus. DNA-binding protein involved in single-strand DNA break repair, double-strand DNA break repair and base excision repair. Resolves abortive DNA ligation intermediates formed either at base excision sites, or when DNA ligases attempt to repair non-ligatable breaks induced by reactive oxygen species. Catalyzes the release of adenylate groups covalently linked to 5'-phosphate termini, resulting in the production of 5'-phosphate termini that can be efficiently rejoined. The chain is Aprataxin-like protein from Drosophila melanogaster (Fruit fly).